Here is a 79-residue protein sequence, read N- to C-terminus: Large ribosomal subunit protein uL29 (79 aa).

It belongs to the universal ribosomal protein uL29 family.

This Tropheryma whipplei (strain TW08/27) (Whipple's bacillus) protein is Large ribosomal subunit protein uL29.